The primary structure comprises 339 residues: GTPase Obg (339 aa).

Residues 1-158 form the Obg domain; the sequence is MKFLDQVDLR…RDLTFELKLM (158 aa). Disordered regions lie at residues 66–86 and 125–148; these read FAEDGEPGGRREQTGASGEDK and GNAFFKSSTNQAPRESQPGEPGEE. Residues 72 to 86 show a composition bias toward basic and acidic residues; sequence PGGRREQTGASGEDK. Residues 129–138 show a composition bias toward polar residues; that stretch reads FKSSTNQAPR. An OBG-type G domain is found at 159-329; that stretch reads ADVGLVGFPN…LKYTLFDTVH (171 aa). GTP is bound by residues 165–172, 190–194, 212–215, 279–282, and 310–312; these read GFPNAGKS, FTTLT, DIPG, SKID, and SAV. Residues Ser-172 and Thr-192 each contribute to the Mg(2+) site.

Belongs to the TRAFAC class OBG-HflX-like GTPase superfamily. OBG GTPase family. In terms of assembly, monomer. The cofactor is Mg(2+).

It is found in the cytoplasm. Functionally, an essential GTPase which binds GTP, GDP and possibly (p)ppGpp with moderate affinity, with high nucleotide exchange rates and a fairly low GTP hydrolysis rate. Plays a role in control of the cell cycle, stress response, ribosome biogenesis and in those bacteria that undergo differentiation, in morphogenesis control. This is GTPase Obg from Salinibacter ruber (strain DSM 13855 / M31).